The sequence spans 884 residues: Schlafen family member 5 (884 aa).

574 to 581 (GLPGSGKT) serves as a coordination point for ATP.

The protein belongs to the Schlafen family. Subgroup III subfamily.

Its function is as follows. May have a role in hematopoietic cell differentiation. The polypeptide is Schlafen family member 5 (Slfn5) (Mus musculus (Mouse)).